We begin with the raw amino-acid sequence, 131 residues long: Large ribosomal subunit protein bL19 (131 aa).

Positions 1 to 11 (MEETMNNQEAP) are enriched in polar residues. The interval 1 to 20 (MEETMNNQEAPETSEEETVA) is disordered.

The protein belongs to the bacterial ribosomal protein bL19 family.

Functionally, this protein is located at the 30S-50S ribosomal subunit interface and may play a role in the structure and function of the aminoacyl-tRNA binding site. This chain is Large ribosomal subunit protein bL19, found in Dehalococcoides mccartyi (strain ATCC BAA-2100 / JCM 16839 / KCTC 5957 / BAV1).